We begin with the raw amino-acid sequence, 190 residues long: Elongation factor P-like protein (190 aa).

This sequence belongs to the elongation factor P family.

The chain is Elongation factor P-like protein from Yersinia pestis bv. Antiqua (strain Antiqua).